The chain runs to 472 residues: Membrane-bound acylglycerophosphatidylinositol O-acyltransferase MBOAT7 (472 aa).

Residues 1–5 (MSPEE) are Cytoplasmic-facing. The helical transmembrane segment at 6–22 (WTYLVVLLISIPIGFLF) threads the bilayer. Topologically, residues 23-33 (KKAGPGLKRWG) are lumenal. A helical transmembrane segment spans residues 34 to 57 (AAAVGLGLTLFTCGPHTLHSLVTI). Over 58–73 (LGTWALIQAQPCSCHA) the chain is Cytoplasmic. Residues 74 to 93 (LALAWTFSYLLFFRALSLLG) traverse the membrane as a helical segment. Residues 94–194 (LPTPTPFTNA…VPSLRPLLRR (101 aa)) are Lumenal-facing. A helical membrane pass occupies residues 195-212 (AWPAPLFGLLFLLSSHLF). At 213–231 (PLEAVREDAFYARPLPARL) the chain is on the cytoplasmic side. Residues 232–261 (FYMIPVFFAFRMRFYVAWIAAECGCIAAGF) form a helical membrane-spanning segment. Residues 262–426 (GAYPVAAKAR…LSLADTLRYW (165 aa)) are Lumenal-facing. Residue Asn-321 is glycosylated (N-linked (GlcNAc...) asparagine). The helical transmembrane segment at 427–447 (ASIYFCIHFLALAALGLGLAL) threads the bilayer. The Cytoplasmic segment spans residues 448 to 472 (GGGSPSRRKAASQPTSLAPEKLREE). A disordered region spans residues 453 to 472 (SRRKAASQPTSLAPEKLREE).

Belongs to the membrane-bound acyltransferase family. Interacts with SPTSSA; the interaction facilitates MBOAT7 location to mitochondria-associated membranes (MAMs). In terms of tissue distribution, overexpressed in metastatic breast and bladder carcinomas relative to normal breast epithelium and urothelium.

The protein localises to the endoplasmic reticulum membrane. It catalyses the reaction a 1-acyl-sn-glycero-3-phospho-(1D-myo-inositol) + (5Z,8Z,11Z,14Z)-eicosatetraenoyl-CoA = a 1-acyl-2-(5Z,8Z,11Z,14Z-eicosatetraenoyl)-sn-glycero-3-phospho-(1D-myo-inositol) + CoA. The enzyme catalyses (5Z,8Z,11Z,14Z)-eicosatetraenoyl-CoA + 1-hexadecanoyl-sn-glycero-3-phosphocholine = 1-hexadecanoyl-2-(5Z,8Z,11Z,14Z-eicosatetraenoyl)-sn-glycero-3-phosphocholine + CoA. It carries out the reaction a 1-acyl-sn-glycero-3-phospho-(1D-myo-inositol) + an acyl-CoA = a 1,2-diacyl-sn-glycero-3-phospho-(1D-myo-inositol) + CoA. The catalysed reaction is 1-octadecanoyl-sn-glycero-3-phospho-(1D-myo-inositol) + (5Z,8Z,11Z,14Z)-eicosatetraenoyl-CoA = 1-octadecanoyl-2-(5Z,8Z,11Z,14Z-eicosatetraenoyl)-sn-glycero-3-phospho-(1D-myo-inositol) + CoA. It participates in lipid metabolism; phospholipid metabolism. Its activity is regulated as follows. Activity is inhibited by thimerosal. Acyltransferase which catalyzes the transfer of an acyl group from an acyl-CoA to a lysophosphatidylinositol (1-acylglycerophosphatidylinositol or LPI) leading to the production of a phosphatidylinositol (1,2-diacyl-sn-glycero-3-phosphoinositol or PI) and participates in the reacylation step of the phospholipid remodeling pathway also known as the Lands cycle. Prefers arachidonoyl-CoA as the acyl donor, thus contributing to the regulation of free levels arachidonic acid in cell. In liver, participates in the regulation of triglyceride metabolism through the phosphatidylinositol acyl-chain remodeling regulation. This is Membrane-bound acylglycerophosphatidylinositol O-acyltransferase MBOAT7 from Homo sapiens (Human).